Consider the following 689-residue polypeptide: Glycine--tRNA ligase beta subunit (689 aa).

It belongs to the class-II aminoacyl-tRNA synthetase family. As to quaternary structure, tetramer of two alpha and two beta subunits.

It localises to the cytoplasm. It carries out the reaction tRNA(Gly) + glycine + ATP = glycyl-tRNA(Gly) + AMP + diphosphate. The chain is Glycine--tRNA ligase beta subunit from Hamiltonella defensa subsp. Acyrthosiphon pisum (strain 5AT).